A 300-amino-acid chain; its full sequence is Acetylglutamate kinase (300 aa).

Substrate is bound by residues 73-74 (GG), arginine 95, and asparagine 197.

Belongs to the acetylglutamate kinase family. ArgB subfamily.

The protein resides in the cytoplasm. The catalysed reaction is N-acetyl-L-glutamate + ATP = N-acetyl-L-glutamyl 5-phosphate + ADP. Its pathway is amino-acid biosynthesis; L-arginine biosynthesis; N(2)-acetyl-L-ornithine from L-glutamate: step 2/4. Its function is as follows. Catalyzes the ATP-dependent phosphorylation of N-acetyl-L-glutamate. The sequence is that of Acetylglutamate kinase from Bordetella pertussis (strain Tohama I / ATCC BAA-589 / NCTC 13251).